Here is a 528-residue protein sequence, read N- to C-terminus: G patch domain-containing protein 2 (528 aa).

Residues 36-119 form a disordered region; sequence LEESSEQARG…NKKDHSDSDD (84 aa). Positions 63 to 77 are enriched in basic residues; sequence RQARKRRGRKRRSYN. A compositionally biased stretch (basic and acidic residues) spans 98 to 117; that stretch reads EPSKDYRENHNNNKKDHSDS. Ser-115, Ser-117, Ser-146, and Ser-195 each carry phosphoserine. 2 disordered regions span residues 232 to 282 and 487 to 528; these read SEET…GDDE and GRDG…GKSA. Positions 239-252 are enriched in basic and acidic residues; it reads NKDKMECEEQKVSD. Residues 467 to 513 form the G-patch domain; that stretch reads ENNIGNRMLQNMGWTPGSGLGRDGKGISEPIQAMQRPKGLGLGFPLP. Residues 514 to 528 show a composition bias toward polar residues; that stretch reads KSTSATTTPNAGKSA.

In terms of assembly, interacts with DHX15. Testis.

The protein localises to the nucleus speckle. The protein resides in the nucleus. Its subcellular location is the nucleolus. Enhances the ATPase activity of DHX15 in vitro. The chain is G patch domain-containing protein 2 (GPATCH2) from Homo sapiens (Human).